Consider the following 300-residue polypeptide: Ribonuclease HIII (300 aa).

Residues 83–300 (IPIIGSDEVG…THKAQALLTK (218 aa)) form the RNase H type-2 domain. 3 residues coordinate a divalent metal cation: D89, E90, and D194.

Belongs to the RNase HII family. RnhC subfamily. Mn(2+) serves as cofactor. It depends on Mg(2+) as a cofactor.

It localises to the cytoplasm. The enzyme catalyses Endonucleolytic cleavage to 5'-phosphomonoester.. Endonuclease that specifically degrades the RNA of RNA-DNA hybrids. This Streptococcus pyogenes serotype M1 protein is Ribonuclease HIII.